The following is a 545-amino-acid chain: CTP synthase (545 aa).

The tract at residues 1–266 (MTTRYIFVTG…DELVVKRFGI (266 aa)) is amidoligase domain. A CTP-binding site is contributed by serine 14. Serine 14 is a binding site for UTP. Residues 15-20 (SLGKGI) and aspartate 72 contribute to the ATP site. 2 residues coordinate Mg(2+): aspartate 72 and glutamate 140. CTP is bound by residues 147 to 149 (DIE), 187 to 192 (KTKPTQ), and lysine 223. UTP is bound by residues 187-192 (KTKPTQ) and lysine 223. Position 239–241 (239–241 (KDV)) interacts with ATP. Residues 291–542 (TIGMVGKYIE…VAAATAYQKR (252 aa)) form the Glutamine amidotransferase type-1 domain. Position 352 (glycine 352) interacts with L-glutamine. Cysteine 379 acts as the Nucleophile; for glutamine hydrolysis in catalysis. L-glutamine-binding positions include 380 to 383 (LGLQ), glutamate 403, and arginine 470. Catalysis depends on residues histidine 515 and glutamate 517.

This sequence belongs to the CTP synthase family. As to quaternary structure, homotetramer.

The catalysed reaction is UTP + L-glutamine + ATP + H2O = CTP + L-glutamate + ADP + phosphate + 2 H(+). It catalyses the reaction L-glutamine + H2O = L-glutamate + NH4(+). It carries out the reaction UTP + NH4(+) + ATP = CTP + ADP + phosphate + 2 H(+). It functions in the pathway pyrimidine metabolism; CTP biosynthesis via de novo pathway; CTP from UDP: step 2/2. Its activity is regulated as follows. Allosterically activated by GTP, when glutamine is the substrate; GTP has no effect on the reaction when ammonia is the substrate. The allosteric effector GTP functions by stabilizing the protein conformation that binds the tetrahedral intermediate(s) formed during glutamine hydrolysis. Inhibited by the product CTP, via allosteric rather than competitive inhibition. Catalyzes the ATP-dependent amination of UTP to CTP with either L-glutamine or ammonia as the source of nitrogen. Regulates intracellular CTP levels through interactions with the four ribonucleotide triphosphates. The protein is CTP synthase of Shewanella sediminis (strain HAW-EB3).